The sequence spans 370 residues: MVYETGNETVDDAVQRALDGERLDRTDGLALLAQPVDELAAGADLLRRHFSDGTVDACSIVNAKAGNCAEDCGFCAQSAHFDTGIDTYGFLDPEDILDAAKRAEADGAQRFGIVVAEKGVSKEKRPDEWDDVIRAIRLVRDETDVEVDASLGVLTEEEAEILAAEGLNHYNHNIETSRRYFSEIVNTHSFDDRLKTLHRAKAAGMDLCAGVILGMGETPADRVDAAIELQEVGVSSLPVNILNPVEGTPIGDREAATISRTELIKTIAVYRFLHPEARVRLTGGREVNLDPDEQHLPFEAGADGLLTGDYLTTDGQTPADDIEIIERAGLEPNREANTFDPESVKARHRSPAAETASNANRTNATTETDD.

One can recognise a Radical SAM core domain in the interval 50–276; that stretch reads FSDGTVDACS…IAVYRFLHPE (227 aa). [4Fe-4S] cluster contacts are provided by C68, C72, and C75. Residues C208 and R280 each contribute to the [2Fe-2S] cluster site. Positions 328 to 370 are disordered; the sequence is AGLEPNREANTFDPESVKARHRSPAAETASNANRTNATTETDD. Residues 352-370 are compositionally biased toward low complexity; that stretch reads AAETASNANRTNATTETDD.

This sequence belongs to the radical SAM superfamily. Biotin synthase family. Homodimer. Requires [4Fe-4S] cluster as cofactor. [2Fe-2S] cluster is required as a cofactor.

The catalysed reaction is (4R,5S)-dethiobiotin + (sulfur carrier)-SH + 2 reduced [2Fe-2S]-[ferredoxin] + 2 S-adenosyl-L-methionine = (sulfur carrier)-H + biotin + 2 5'-deoxyadenosine + 2 L-methionine + 2 oxidized [2Fe-2S]-[ferredoxin]. It participates in cofactor biosynthesis; biotin biosynthesis; biotin from 7,8-diaminononanoate: step 2/2. In terms of biological role, catalyzes the conversion of dethiobiotin (DTB) to biotin by the insertion of a sulfur atom into dethiobiotin via a radical-based mechanism. This is Biotin synthase from Natronomonas pharaonis (strain ATCC 35678 / DSM 2160 / CIP 103997 / JCM 8858 / NBRC 14720 / NCIMB 2260 / Gabara) (Halobacterium pharaonis).